The sequence spans 33 residues: GLMSVLKKAGKHVAKNVAVSLMDSLKCKISGGC.

Cys-27 and Cys-33 are joined by a disulfide.

Expressed by the skin glands.

The protein localises to the secreted. Has antibacterial activity. The chain is Brevinin 2AV from Rana arvalis (Moor frog).